The primary structure comprises 451 residues: Target of rapamycin complex 1 subunit tco89 (451 aa).

Residues 1 to 35 form a disordered region; that stretch reads MERPSLSRRTSSSTVSTDGEGVYSRSTKERKRNFI. The segment covering 7–17 has biased composition (low complexity); it reads SRRTSSSTVST. Position 70 is a phosphoserine (Ser70). Disordered stretches follow at residues 122–164, 176–264, and 362–437; these read WDDA…PVTR, INSN…GNSL, and NQNF…DTDY. A compositionally biased stretch (polar residues) spans 129–162; it reads NDSTAGNLDSDSALPTPSVTTNEAADSSRASSPV. The span at 203–215 shows a compositional bias: low complexity; that stretch reads DDSAADASTTKSS. Composition is skewed to polar residues over residues 228-242, 362-376, and 407-417; these read HSNN…NQPK, NQNF…TSAA, and QSASLNASMSA. The span at 419–430 shows a compositional bias: basic residues; that stretch reads SHARQRSIHVPK.

This sequence belongs to the TORC subunit TCO89 family. In terms of assembly, the target of rapamycin complex 1 (TORC1) is composed of at least mip1, pop3/wat1, tco89, toc1 and tor2. Either Thr-10, Ser-11, Ser-12, Ser-13 or Thr-14 and Ser-214 or Ser-215 and Ser-247 or Ser-249 are phosphorylated as well.

The protein resides in the cytoplasm. Functionally, component of TORC1, which regulates multiple cellular processes to control cell growth in response to environmental signals. Tor2 is essential for growth. Nutrient limitation and environmental stress signals cause inactivation of TORC1. Active TORC1 positively controls cell growth and ribosome biogenesis by regulating ribosomal protein gene expression. TORC1 negatively controls G1 cell-cycle arrest, sexual development and amino acid uptake. Represses mating, meiosis and sporulation efficiency by interfering with the functions of the transcription factor ste11 and the meiosis-promoting RNA-binding protein mei2. The sequence is that of Target of rapamycin complex 1 subunit tco89 from Schizosaccharomyces pombe (strain 972 / ATCC 24843) (Fission yeast).